The sequence spans 535 residues: MAKSRYSRKNKGKKLQRVQENTVSTEEKSVPEVETIDFNGFQIPKVYDGKLERKPMELEIKKGFVEGMNGDAKIFCNDDLFNLLTFEMIKDISNNYPSCVRQTANAATLPGVVASLAMPDAHSGYGFSIGGVVAMRLDNSEAVICPGGVGFDINCGVRLIRTNLQREDIEQHKSRLADELFKQIPSGVGTKAQIAFSPEDFDSIMTEGLEFLVKNGYAWEEDLSHCEEHGKIANADPSLVSKSAKSRGYKQVGTLGSGNHYLEVQVVDEIMDVEAAKAMGINEVGQVCIMVHCGSRGLGHQVCQDYIDLCMKSGICNPIDKQLTGVPFNSPIGQQYYSAMNCCANFAFANRGMITYRIRQAFETVLRMKPKKMDMHLVYDVCHNIAKVEEHEVDNKKVQCIVHRKGATRAFPPQHPDISEDYKEIGQPAIIGGSMGTCSYVLVGTQEGMKKSFGSTCHGAGRKMSRVKAMDNLTSKDVINRIKEMGIELRITDPKLAAEEADEAYKDVTEVVETCQAAGISKIVLRLKPLIVIKG.

Basic residues predominate over residues 1 to 16 (MAKSRYSRKNKGKKLQ). The interval 1-29 (MAKSRYSRKNKGKKLQRVQENTVSTEEKS) is disordered. Mn(2+) contacts are provided by Asp152, Cys155, His260, His292, and His383. Residue 259 to 263 (NHYLE) participates in GMP binding. GMP contacts are provided by residues 383-384 (HN), 432-435 (GGSM), Ser439, 458-461 (HGAG), and Lys534. His458 (GMP-histidine intermediate) is an active-site residue.

This sequence belongs to the RtcB family. As to quaternary structure, catalytic component of the tRNA-splicing ligase complex. The cofactor is Mn(2+).

It catalyses the reaction a 3'-end 3'-phospho-ribonucleotide-RNA + a 5'-end dephospho-ribonucleoside-RNA + GTP = a ribonucleotidyl-ribonucleotide-RNA + GMP + diphosphate. The catalysed reaction is a 3'-end 2',3'-cyclophospho-ribonucleotide-RNA + a 5'-end dephospho-ribonucleoside-RNA + GTP + H2O = a ribonucleotidyl-ribonucleotide-RNA + GMP + diphosphate + H(+). Catalytic subunit of the tRNA-splicing ligase complex that acts by directly joining spliced tRNA halves to mature-sized tRNAs by incorporating the precursor-derived splice junction phosphate into the mature tRNA as a canonical 3',5'-phosphodiester. May act as an RNA ligase with broad substrate specificity, and may function toward other RNAs. This Entamoeba dispar (strain ATCC PRA-260 / SAW760) protein is RNA-splicing ligase RtcB homolog 1.